Here is a 70-residue protein sequence, read N- to C-terminus: MPTSVKCPTCQKDVIWNNESKFKPFCCERCKLIDLGDWASEKHAIPVKPEFDADDLDNLGYDEADFFKEN.

Zn(2+) is bound by residues Cys-7, Cys-10, Cys-26, and Cys-30.

This sequence belongs to the DNA gyrase inhibitor YacG family. Interacts with GyrB. Zn(2+) serves as cofactor.

Its function is as follows. Inhibits all the catalytic activities of DNA gyrase by preventing its interaction with DNA. Acts by binding directly to the C-terminal domain of GyrB, which probably disrupts DNA binding by the gyrase. In Shewanella woodyi (strain ATCC 51908 / MS32), this protein is DNA gyrase inhibitor YacG.